Consider the following 520-residue polypeptide: 2-isopropylmalate synthase (520 aa).

Residues 5–267 form the Pyruvate carboxyltransferase domain; the sequence is VIIFDTTLRD…HTNINHQEIY (263 aa). Mn(2+) is bound by residues D14, H202, H204, and N238. A regulatory domain region spans residues 392–520; sequence RLDYFSVQSG…RLQQNNQEMV (129 aa).

Belongs to the alpha-IPM synthase/homocitrate synthase family. LeuA type 1 subfamily. Homodimer. It depends on Mn(2+) as a cofactor.

Its subcellular location is the cytoplasm. It catalyses the reaction 3-methyl-2-oxobutanoate + acetyl-CoA + H2O = (2S)-2-isopropylmalate + CoA + H(+). It functions in the pathway amino-acid biosynthesis; L-leucine biosynthesis; L-leucine from 3-methyl-2-oxobutanoate: step 1/4. In terms of biological role, catalyzes the condensation of the acetyl group of acetyl-CoA with 3-methyl-2-oxobutanoate (2-ketoisovalerate) to form 3-carboxy-3-hydroxy-4-methylpentanoate (2-isopropylmalate). This chain is 2-isopropylmalate synthase, found in Yersinia pseudotuberculosis serotype O:1b (strain IP 31758).